A 165-amino-acid polypeptide reads, in one-letter code: SsrA-binding protein (165 aa).

Positions 141–165 are disordered; that stretch reads KLHDKRENEKRKQSEREVKSALARY. A compositionally biased stretch (basic and acidic residues) spans 144–159; sequence DKRENEKRKQSEREVK.

This sequence belongs to the SmpB family.

It localises to the cytoplasm. Required for rescue of stalled ribosomes mediated by trans-translation. Binds to transfer-messenger RNA (tmRNA), required for stable association of tmRNA with ribosomes. tmRNA and SmpB together mimic tRNA shape, replacing the anticodon stem-loop with SmpB. tmRNA is encoded by the ssrA gene; the 2 termini fold to resemble tRNA(Ala) and it encodes a 'tag peptide', a short internal open reading frame. During trans-translation Ala-aminoacylated tmRNA acts like a tRNA, entering the A-site of stalled ribosomes, displacing the stalled mRNA. The ribosome then switches to translate the ORF on the tmRNA; the nascent peptide is terminated with the 'tag peptide' encoded by the tmRNA and targeted for degradation. The ribosome is freed to recommence translation, which seems to be the essential function of trans-translation. The polypeptide is SsrA-binding protein (Prochlorococcus marinus (strain SARG / CCMP1375 / SS120)).